The primary structure comprises 367 residues: Adenine deaminase (367 aa).

Residues histidine 19, histidine 21, and histidine 209 each coordinate Zn(2+). Catalysis depends on glutamate 212, which acts as the Proton donor. Aspartate 290 is a Zn(2+) binding site. Residue aspartate 291 coordinates substrate.

It belongs to the metallo-dependent hydrolases superfamily. Adenosine and AMP deaminases family. Adenine deaminase type 2 subfamily. Requires Zn(2+) as cofactor.

The protein resides in the cytoplasm. Its subcellular location is the nucleus. The enzyme catalyses adenine + H2O + H(+) = hypoxanthine + NH4(+). Its function is as follows. Catalyzes the hydrolytic deamination of adenine to hypoxanthine. Plays an important role in the purine salvage pathway and in nitrogen catabolism. Also exhibits a low activity towards N(6)-substituted adenines that are commonly known as the plant hormones cytokinins. The polypeptide is Adenine deaminase (Schizosaccharomyces pombe (strain 972 / ATCC 24843) (Fission yeast)).